Consider the following 768-residue polypeptide: Actin filament-associated protein 1-like 1 (768 aa).

Positions 83 to 145 are disordered; the sequence is LRDMSDDGEP…GKSPEYISSH (63 aa). A phosphoserine mark is found at S87, S93, S97, S103, and S153. Polar residues predominate over residues 165–185; the sequence is SYPTTRMNGELKNSYNDSDAM. Residues 165–211 form a disordered region; that stretch reads SYPTTRMNGELKNSYNDSDAMSSSYESYDEEEEEEKGRQPKHQWPSE. Residues 220–316 enclose the PH 1 domain; the sequence is DCRICAFLLR…WLKVIREVSR (97 aa). A phosphoserine mark is found at S329 and S343. The segment covering 340 to 349 has biased composition (basic and acidic residues); the sequence is KRLSQEKQNS. The tract at residues 340-382 is disordered; the sequence is KRLSQEKQNSDSDSLGMNDSGSTLGRREACEHGKGKKNSLAEL. A compositionally biased stretch (polar residues) spans 350–362; that stretch reads DSDSLGMNDSGST. Positions 418 to 512 constitute a PH 2 domain; it reads EVPCCGYLNV…WLGLLLVEMG (95 aa). Y557 is subject to Phosphotyrosine. Positions 564 to 609 are disordered; it reads KVQDEEPQRPTGAQVKRHASSCSEKSHRADPQVKVKRHASSANQYK. The span at 587-596 shows a compositional bias: basic and acidic residues; it reads EKSHRADPQV. The stretch at 611–701 forms a coiled coil; it reads GKNRAEEDAR…AVKERLQQSL (91 aa). The interval 705–768 is disordered; the sequence is PALGLSVSNK…KAKEWEMKKT (64 aa). A compositionally biased stretch (polar residues) spans 710-734; the sequence is SVSNKNKSQDTTNKPQSNAPEQSLP. A Phosphoserine modification is found at S747. Residues 759-768 are compositionally biased toward basic and acidic residues; that stretch reads KAKEWEMKKT.

Interacts with CTTN.

It is found in the cytoplasm. Its subcellular location is the cell projection. The protein localises to the podosome. It localises to the invadopodium. The protein resides in the cytoskeleton. It is found in the stress fiber. In terms of biological role, may be involved in podosome and invadosome formation. The chain is Actin filament-associated protein 1-like 1 (Afap1l1) from Mus musculus (Mouse).